The sequence spans 297 residues: Homoserine kinase (297 aa).

Residue 82–92 (PLTRGLGSSAS) participates in ATP binding.

This sequence belongs to the GHMP kinase family. Homoserine kinase subfamily.

Its subcellular location is the cytoplasm. The enzyme catalyses L-homoserine + ATP = O-phospho-L-homoserine + ADP + H(+). Its pathway is amino-acid biosynthesis; L-threonine biosynthesis; L-threonine from L-aspartate: step 4/5. Its function is as follows. Catalyzes the ATP-dependent phosphorylation of L-homoserine to L-homoserine phosphate. The protein is Homoserine kinase of Bacillus anthracis (strain CDC 684 / NRRL 3495).